Consider the following 281-residue polypeptide: Bifunctional protein FolD (281 aa).

NADP(+) contacts are provided by residues G165–G167, T192, and V233.

This sequence belongs to the tetrahydrofolate dehydrogenase/cyclohydrolase family. Homodimer.

It catalyses the reaction (6R)-5,10-methylene-5,6,7,8-tetrahydrofolate + NADP(+) = (6R)-5,10-methenyltetrahydrofolate + NADPH. The enzyme catalyses (6R)-5,10-methenyltetrahydrofolate + H2O = (6R)-10-formyltetrahydrofolate + H(+). It participates in one-carbon metabolism; tetrahydrofolate interconversion. Functionally, catalyzes the oxidation of 5,10-methylenetetrahydrofolate to 5,10-methenyltetrahydrofolate and then the hydrolysis of 5,10-methenyltetrahydrofolate to 10-formyltetrahydrofolate. In Mycobacterium avium (strain 104), this protein is Bifunctional protein FolD.